Consider the following 581-residue polypeptide: Proline--tRNA ligase (581 aa).

The protein belongs to the class-II aminoacyl-tRNA synthetase family. ProS type 1 subfamily. In terms of assembly, homodimer.

It localises to the cytoplasm. The catalysed reaction is tRNA(Pro) + L-proline + ATP = L-prolyl-tRNA(Pro) + AMP + diphosphate. In terms of biological role, catalyzes the attachment of proline to tRNA(Pro) in a two-step reaction: proline is first activated by ATP to form Pro-AMP and then transferred to the acceptor end of tRNA(Pro). As ProRS can inadvertently accommodate and process non-cognate amino acids such as alanine and cysteine, to avoid such errors it has two additional distinct editing activities against alanine. One activity is designated as 'pretransfer' editing and involves the tRNA(Pro)-independent hydrolysis of activated Ala-AMP. The other activity is designated 'posttransfer' editing and involves deacylation of mischarged Ala-tRNA(Pro). The misacylated Cys-tRNA(Pro) is not edited by ProRS. The sequence is that of Proline--tRNA ligase from Acidovorax ebreus (strain TPSY) (Diaphorobacter sp. (strain TPSY)).